Reading from the N-terminus, the 568-residue chain is Phosphomethylpyrimidine synthase (568 aa).

Residues N188, M217, Y246, H282, 302 to 304 (SRG), 343 to 346 (DGLR), and E382 each bind substrate. Zn(2+) is bound at residue H386. Y409 lines the substrate pocket. H450 contacts Zn(2+). C530, C533, and C538 together coordinate [4Fe-4S] cluster.

The protein belongs to the ThiC family. In terms of assembly, homodimer. Requires [4Fe-4S] cluster as cofactor.

It carries out the reaction 5-amino-1-(5-phospho-beta-D-ribosyl)imidazole + S-adenosyl-L-methionine = 4-amino-2-methyl-5-(phosphooxymethyl)pyrimidine + CO + 5'-deoxyadenosine + formate + L-methionine + 3 H(+). The protein operates within cofactor biosynthesis; thiamine diphosphate biosynthesis. Its function is as follows. Catalyzes the synthesis of the hydroxymethylpyrimidine phosphate (HMP-P) moiety of thiamine from aminoimidazole ribotide (AIR) in a radical S-adenosyl-L-methionine (SAM)-dependent reaction. This chain is Phosphomethylpyrimidine synthase, found in Idiomarina loihiensis (strain ATCC BAA-735 / DSM 15497 / L2-TR).